The sequence spans 428 residues: Chaperone SurA (428 aa).

Positions 1–13 (MLGALLLSGAVHA) are cleaved as a signal peptide. 2 PpiC domains span residues 164-265 (SEEF…KLLE) and 276-375 (RDEV…EVLG).

It is found in the periplasm. The catalysed reaction is [protein]-peptidylproline (omega=180) = [protein]-peptidylproline (omega=0). Chaperone involved in the correct folding and assembly of outer membrane proteins. Recognizes specific patterns of aromatic residues and the orientation of their side chains, which are found more frequently in integral outer membrane proteins. May act in both early periplasmic and late outer membrane-associated steps of protein maturation. The sequence is that of Chaperone SurA from Pseudomonas savastanoi pv. phaseolicola (strain 1448A / Race 6) (Pseudomonas syringae pv. phaseolicola (strain 1448A / Race 6)).